A 152-amino-acid chain; its full sequence is Transcriptional regulator MraZ (152 aa).

SpoVT-AbrB domains follow at residues 5–52 (ATLV…PLPE) and 81–124 (ASEC…DETT).

It belongs to the MraZ family. As to quaternary structure, forms oligomers.

The protein resides in the cytoplasm. Its subcellular location is the nucleoid. In terms of biological role, negatively regulates its own expression and that of the subsequent genes in the proximal part of the division and cell wall (dcw) gene cluster. Acts by binding directly to DNA. May also regulate the expression of genes outside the dcw cluster. In Citrobacter koseri (strain ATCC BAA-895 / CDC 4225-83 / SGSC4696), this protein is Transcriptional regulator MraZ.